The primary structure comprises 598 residues: Beta-galactosidase (598 aa).

Residues 1–21 (MLRTTLAPLVLALALALPAAA) form the signal peptide. Glutamate 184 functions as the Proton donor in the catalytic mechanism. Glutamate 260 functions as the Nucleophile in the catalytic mechanism.

The protein belongs to the glycosyl hydrolase 35 family.

It catalyses the reaction Hydrolysis of terminal non-reducing beta-D-galactose residues in beta-D-galactosides.. In terms of biological role, preferentially hydrolyzes beta(1-&gt;3) galactosyl linkages over beta(1-&gt;4) linkages. The chain is Beta-galactosidase (bga) from Xanthomonas manihotis.